A 357-amino-acid chain; its full sequence is Large ribosomal subunit protein mL45 (357 aa).

Residues 333–357 (EAKALPLRTTEKLEEAKKEKEQQEI) form a disordered region. The span at 341–357 (TTEKLEEAKKEKEQQEI) shows a compositional bias: basic and acidic residues.

It belongs to the mitochondrion-specific ribosomal protein mL45 family.

The protein resides in the mitochondrion. The sequence is that of Large ribosomal subunit protein mL45 (mrpl-45) from Caenorhabditis elegans.